Here is a 41-residue protein sequence, read N- to C-terminus: Large ribosomal subunit protein bL36 (41 aa).

This sequence belongs to the bacterial ribosomal protein bL36 family.

The protein is Large ribosomal subunit protein bL36 (rpmJ) of Agrobacterium fabrum (strain C58 / ATCC 33970) (Agrobacterium tumefaciens (strain C58)).